Reading from the N-terminus, the 128-residue chain is Large ribosomal subunit protein bL19 (128 aa).

It belongs to the bacterial ribosomal protein bL19 family.

In terms of biological role, this protein is located at the 30S-50S ribosomal subunit interface and may play a role in the structure and function of the aminoacyl-tRNA binding site. The polypeptide is Large ribosomal subunit protein bL19 (Aromatoleum aromaticum (strain DSM 19018 / LMG 30748 / EbN1) (Azoarcus sp. (strain EbN1))).